Consider the following 96-residue polypeptide: Growth-regulated alpha protein (96 aa).

A signal peptide spans 1-24 (MVSATRSLLCAALPVLATSRQATG). 2 cysteine pairs are disulfide-bonded: C33–C59 and C35–C75.

It belongs to the intercrine alpha (chemokine CxC) family. In terms of assembly, monomer and homodimer. As to expression, at least expressed in the lung and trachea.

Its subcellular location is the secreted. Functionally, has chemotactic activity for neutrophils. Contributes to neutrophil activation during inflammation. This is Growth-regulated alpha protein (Cxcl1) from Rattus norvegicus (Rat).